The sequence spans 533 residues: Chromosomal replication initiator protein DnaA (533 aa).

The interval 1-72 is domain I, interacts with DnaA modulators; sequence MNDFWQHCSA…DLARDFWNAP (72 aa). Residues 72 to 196 are domain II; that stretch reads PIEVQFVLDP…EAADSMYERS (125 aa). A disordered region spans residues 83-113; sequence AGQRSPAGATPLAPRAPLPSANPAPVAPGPA. Residues 96–110 are compositionally biased toward pro residues; that stretch reads PRAPLPSANPAPVAP. The tract at residues 197-413 is domain III, AAA+ region; the sequence is KLNPVLTFDN…GALRKILAYS (217 aa). The ATP site is built by Gly241, Gly243, Lys244, and Thr245. Positions 414–533 are domain IV, binds dsDNA; that stretch reads KFHGREITIE…LHVLEQTLKG (120 aa).

It belongs to the DnaA family. Oligomerizes as a right-handed, spiral filament on DNA at oriC.

The protein resides in the cytoplasm. Plays an essential role in the initiation and regulation of chromosomal replication. ATP-DnaA binds to the origin of replication (oriC) to initiate formation of the DNA replication initiation complex once per cell cycle. Binds the DnaA box (a 9 base pair repeat at the origin) and separates the double-stranded (ds)DNA. Forms a right-handed helical filament on oriC DNA; dsDNA binds to the exterior of the filament while single-stranded (ss)DNA is stabiized in the filament's interior. The ATP-DnaA-oriC complex binds and stabilizes one strand of the AT-rich DNA unwinding element (DUE), permitting loading of DNA polymerase. After initiation quickly degrades to an ADP-DnaA complex that is not apt for DNA replication. Binds acidic phospholipids. The chain is Chromosomal replication initiator protein DnaA from Burkholderia mallei (strain SAVP1).